The sequence spans 227 residues: Isopentenyl-diphosphate Delta-isomerase 1 (227 aa).

Substrate is bound at residue Lys-36. The Mg(2+) site is built by His-40 and His-51. The Nudix hydrolase domain occupies 49–199 (LLHRAFSVFL…EVKLTPWFKI (151 aa)). The substrate site is built by Arg-70 and Lys-74. Residue Cys-86 is part of the active site. Ser-87 is a binding site for substrate. Positions 146 and 148 each coordinate Mg(2+). The active site involves Glu-148. Residue Lys-176 is modified to N6-acetyllysine. A Microbody targeting signal motif is present at residues 225–227 (HRM).

The protein belongs to the IPP isomerase type 1 family. Monomer. Mg(2+) serves as cofactor.

Its subcellular location is the peroxisome. It catalyses the reaction isopentenyl diphosphate = dimethylallyl diphosphate. Its pathway is isoprenoid biosynthesis; dimethylallyl diphosphate biosynthesis; dimethylallyl diphosphate from isopentenyl diphosphate: step 1/1. Catalyzes the 1,3-allylic rearrangement of the homoallylic substrate isopentenyl (IPP) to its highly electrophilic allylic isomer, dimethylallyl diphosphate (DMAPP). In Mesocricetus auratus (Golden hamster), this protein is Isopentenyl-diphosphate Delta-isomerase 1 (IDI1).